The sequence spans 333 residues: Holliday junction branch migration complex subunit RuvB (333 aa).

Residues I4 to Y185 are large ATPase domain (RuvB-L). ATP-binding positions include I24, R25, G66, K69, T70, T71, E132–Y134, R175, Y185, and R222. T70 lines the Mg(2+) pocket. The tract at residues S186–N256 is small ATPAse domain (RuvB-S). The interval K259–G333 is head domain (RuvB-H). The DNA site is built by R295, R314, and R319.

Belongs to the RuvB family. Homohexamer. Forms an RuvA(8)-RuvB(12)-Holliday junction (HJ) complex. HJ DNA is sandwiched between 2 RuvA tetramers; dsDNA enters through RuvA and exits via RuvB. An RuvB hexamer assembles on each DNA strand where it exits the tetramer. Each RuvB hexamer is contacted by two RuvA subunits (via domain III) on 2 adjacent RuvB subunits; this complex drives branch migration. In the full resolvosome a probable DNA-RuvA(4)-RuvB(12)-RuvC(2) complex forms which resolves the HJ.

It is found in the cytoplasm. The catalysed reaction is ATP + H2O = ADP + phosphate + H(+). Functionally, the RuvA-RuvB-RuvC complex processes Holliday junction (HJ) DNA during genetic recombination and DNA repair, while the RuvA-RuvB complex plays an important role in the rescue of blocked DNA replication forks via replication fork reversal (RFR). RuvA specifically binds to HJ cruciform DNA, conferring on it an open structure. The RuvB hexamer acts as an ATP-dependent pump, pulling dsDNA into and through the RuvAB complex. RuvB forms 2 homohexamers on either side of HJ DNA bound by 1 or 2 RuvA tetramers; 4 subunits per hexamer contact DNA at a time. Coordinated motions by a converter formed by DNA-disengaged RuvB subunits stimulates ATP hydrolysis and nucleotide exchange. Immobilization of the converter enables RuvB to convert the ATP-contained energy into a lever motion, pulling 2 nucleotides of DNA out of the RuvA tetramer per ATP hydrolyzed, thus driving DNA branch migration. The RuvB motors rotate together with the DNA substrate, which together with the progressing nucleotide cycle form the mechanistic basis for DNA recombination by continuous HJ branch migration. Branch migration allows RuvC to scan DNA until it finds its consensus sequence, where it cleaves and resolves cruciform DNA. This is Holliday junction branch migration complex subunit RuvB from Hamiltonella defensa subsp. Acyrthosiphon pisum (strain 5AT).